A 105-amino-acid chain; its full sequence is Met repressor (105 aa).

It belongs to the MetJ family. Homodimer.

Its subcellular location is the cytoplasm. In terms of biological role, this regulatory protein, when combined with SAM (S-adenosylmethionine) represses the expression of the methionine regulon and of enzymes involved in SAM synthesis. This Histophilus somni (strain 129Pt) (Haemophilus somnus) protein is Met repressor.